Consider the following 33-residue polypeptide: Cytochrome b6-f complex subunit 6 (33 aa).

Residues 4–24 (ITIISYFGLLLASIIFTLVLF) traverse the membrane as a helical segment.

It belongs to the PetL family. The 4 large subunits of the cytochrome b6-f complex are cytochrome b6, subunit IV (17 kDa polypeptide, PetD), cytochrome f and the Rieske protein, while the 4 small subunits are PetG, PetL, PetM and PetN. The complex functions as a dimer.

The protein resides in the plastid. Its subcellular location is the chloroplast thylakoid membrane. Component of the cytochrome b6-f complex, which mediates electron transfer between photosystem II (PSII) and photosystem I (PSI), cyclic electron flow around PSI, and state transitions. PetL is important for photoautotrophic growth as well as for electron transfer efficiency and stability of the cytochrome b6-f complex. In Pinus mugo (Dwarf mountain pine), this protein is Cytochrome b6-f complex subunit 6.